Reading from the N-terminus, the 338-residue chain is Glyceraldehyde-3-phosphate dehydrogenase 2 (338 aa).

NAD(+) is bound by residues 13 to 14 and glycine 111; that span reads TI. 140 to 142 lines the D-glyceraldehyde 3-phosphate pocket; that stretch reads SCN. Residue cysteine 141 is the Nucleophile of the active site. Residue arginine 169 participates in NAD(+) binding. 195-196 provides a ligand contact to D-glyceraldehyde 3-phosphate; sequence HG. Glutamine 300 contacts NAD(+).

Belongs to the glyceraldehyde-3-phosphate dehydrogenase family. Homotetramer.

The protein resides in the cytoplasm. It carries out the reaction D-glyceraldehyde 3-phosphate + phosphate + NADP(+) = (2R)-3-phospho-glyceroyl phosphate + NADPH + H(+). The catalysed reaction is D-glyceraldehyde 3-phosphate + phosphate + NAD(+) = (2R)-3-phospho-glyceroyl phosphate + NADH + H(+). Its pathway is carbohydrate degradation; glycolysis; pyruvate from D-glyceraldehyde 3-phosphate: step 1/5. This chain is Glyceraldehyde-3-phosphate dehydrogenase 2, found in Methanosarcina barkeri (strain Fusaro / DSM 804).